Consider the following 225-residue polypeptide: uncharacterized protein (225 aa).

Transmembrane regions (helical) follow at residues methionine 25–leucine 45, valine 57–alanine 77, phenylalanine 83–isoleucine 103, leucine 109–threonine 129, leucine 135–valine 155, and isoleucine 187–valine 207.

Its subcellular location is the cell membrane. This is an uncharacterized protein from Mycoplasma pneumoniae (strain ATCC 29342 / M129 / Subtype 1) (Mycoplasmoides pneumoniae).